Reading from the N-terminus, the 905-residue chain is Transcriptional regulator MNL1 (905 aa).

A compositionally biased stretch (polar residues) spans 1 to 29 (MDSHNNIDQSVSELLSDPASVQQSYNSQL). Disordered regions lie at residues 1–34 (MDSH…GPEF), 312–340 (QTQA…ASHT), 383–419 (MDQV…NARY), 434–460 (SEKN…NLLS), 525–544 (TKEE…KPKR), 584–613 (NISS…SESS), 625–671 (NVGK…GTVE), and 685–733 (PASE…TSST). Residues 312–334 (QTQAQAQAHQQQQQQSQQQHSPQ) show a composition bias toward low complexity. The span at 439–460 (NHNNRSPPTPPTSTSSPQNLLS) shows a compositional bias: low complexity. A compositionally biased stretch (polar residues) spans 584 to 598 (NISSHHSSGTPSITT). Positions 628 to 639 (KRKNKSYRKPKG) are enriched in basic residues. Low complexity-rich tracts occupy residues 647 to 669 (QQQQ…STGT) and 690 to 710 (SSLL…EASS). 2 C2H2-type zinc fingers span residues 832-855 (YLCN…RSLH) and 861-883 (YNCD…LKIH). A disordered region spans residues 885–905 (QEDEKDCADAETGVGMDDASG).

It localises to the nucleus. Transcription factor that activates stress response genes via SLE (STRE-like) elements. Required for adaptation to weak acid stress such as acetic acid stress, but seems not involved in the response to heat, osmotic, ethanol, nutrient, oxidative, or heavy-metal stress. Activates a subset of the genes that are repressed by NRG1. In Candida albicans (strain SC5314 / ATCC MYA-2876) (Yeast), this protein is Transcriptional regulator MNL1 (MNL1).